The chain runs to 106 residues: Nucleoid-associated protein Exig_0019 (106 aa).

The segment covering 1–16 (MRGMGNMNNMMKQMQK) has biased composition (low complexity). Positions 1-23 (MRGMGNMNNMMKQMQKMQKDMAK) are disordered.

It belongs to the YbaB/EbfC family. As to quaternary structure, homodimer.

It is found in the cytoplasm. Its subcellular location is the nucleoid. Binds to DNA and alters its conformation. May be involved in regulation of gene expression, nucleoid organization and DNA protection. This is Nucleoid-associated protein Exig_0019 from Exiguobacterium sibiricum (strain DSM 17290 / CCUG 55495 / CIP 109462 / JCM 13490 / 255-15).